A 476-amino-acid chain; its full sequence is Bifunctional protein HldE (476 aa).

The tract at residues Met1–Thr318 is ribokinase. Asn195–Glu198 provides a ligand contact to ATP. Asp264 is a catalytic residue. Residues Met344–Asp476 form a cytidylyltransferase region.

It in the N-terminal section; belongs to the carbohydrate kinase PfkB family. The protein in the C-terminal section; belongs to the cytidylyltransferase family. Homodimer.

It catalyses the reaction D-glycero-beta-D-manno-heptose 7-phosphate + ATP = D-glycero-beta-D-manno-heptose 1,7-bisphosphate + ADP + H(+). The enzyme catalyses D-glycero-beta-D-manno-heptose 1-phosphate + ATP + H(+) = ADP-D-glycero-beta-D-manno-heptose + diphosphate. The protein operates within nucleotide-sugar biosynthesis; ADP-L-glycero-beta-D-manno-heptose biosynthesis; ADP-L-glycero-beta-D-manno-heptose from D-glycero-beta-D-manno-heptose 7-phosphate: step 1/4. It participates in nucleotide-sugar biosynthesis; ADP-L-glycero-beta-D-manno-heptose biosynthesis; ADP-L-glycero-beta-D-manno-heptose from D-glycero-beta-D-manno-heptose 7-phosphate: step 3/4. Its function is as follows. Catalyzes the phosphorylation of D-glycero-D-manno-heptose 7-phosphate at the C-1 position to selectively form D-glycero-beta-D-manno-heptose-1,7-bisphosphate. In terms of biological role, catalyzes the ADP transfer from ATP to D-glycero-beta-D-manno-heptose 1-phosphate, yielding ADP-D-glycero-beta-D-manno-heptose. This chain is Bifunctional protein HldE, found in Haemophilus influenzae (strain PittGG).